The following is a 260-amino-acid chain: ProSAAS (260 aa).

A signal peptide spans 1–33 (MAGSPLLWGPRAGGVGLLVLLLLGLFRPPPALC). Positions 34-215 (ARPVKEPRGL…SADSEGVAAP (182 aa)) are proSAAS(1-180). Residue Thr-53 is glycosylated (O-linked (GalNAc...) threonine). A disordered region spans residues 165–188 (RPRPPVYDDGPAGPDAEEAGDETP). Residues 179-188 (DAEEAGDETP) are compositionally biased toward acidic residues. A C-terminal inhibitory domain; interacts with PCSK1 region spans residues 221-260 (AADHDVGSELPPEGVLGALLRVKRLETPAPQVPARRLLPP). An O-linked (GalNAc...) serine glycan is attached at Ser-228. The short motif at 239–244 (LLRVKR) is the Sufficient for inhibition of PCSK1 element. Thr-247 carries an O-linked (GalNAc...) threonine glycan.

In terms of assembly, interacts via the C-terminal inhibitory domain with PCSK1 66 kDa form. Post-translationally, proteolytically cleaved in the Golgi. In terms of processing, O-glycosylated with a core 1 or possibly core 8 glycan. Expressed in brain and pancreas.

The protein localises to the secreted. Its subcellular location is the golgi apparatus. It localises to the trans-Golgi network. May function in the control of the neuroendocrine secretory pathway. Proposed be a specific endogenous inhibitor of PCSK1. ProSAAS and Big PEN-LEN, both containing the C-terminal inhibitory domain, but not the further processed peptides reduce PCSK1 activity in the endoplasmic reticulum and Golgi. It reduces the activity of the 84 kDa form but not the autocatalytically derived 66 kDa form of PCSK1. Subsequent processing of proSAAS may eliminate the inhibition. Slows down convertase-mediated processing of proopiomelanocortin and proenkephalin. May control the intracellular timing of PCSK1 rather than its total level of activity. In terms of biological role, endogenous ligand for GPR171. Neuropeptide involved in the regulation of feeding. This is ProSAAS (PCSK1N) from Homo sapiens (Human).